The following is a 427-amino-acid chain: Glutamyl-tRNA reductase (427 aa).

Residues 50–53, Ser110, 115–117, and Gln121 each bind substrate; these read TCNR and ETQ. The Nucleophile role is filled by Cys51. 190–195 provides a ligand contact to NADP(+); sequence GAGEMG.

It belongs to the glutamyl-tRNA reductase family. As to quaternary structure, homodimer.

It catalyses the reaction (S)-4-amino-5-oxopentanoate + tRNA(Glu) + NADP(+) = L-glutamyl-tRNA(Glu) + NADPH + H(+). Its pathway is porphyrin-containing compound metabolism; protoporphyrin-IX biosynthesis; 5-aminolevulinate from L-glutamyl-tRNA(Glu): step 1/2. Functionally, catalyzes the NADPH-dependent reduction of glutamyl-tRNA(Glu) to glutamate 1-semialdehyde (GSA). The polypeptide is Glutamyl-tRNA reductase (Campylobacter concisus (strain 13826)).